The primary structure comprises 567 residues: Arginine--tRNA ligase (567 aa).

The short motif at 121 to 131 (ANPNGPLHVGH) is the 'HIGH' region element.

The protein belongs to the class-I aminoacyl-tRNA synthetase family.

The protein localises to the cytoplasm. The catalysed reaction is tRNA(Arg) + L-arginine + ATP = L-arginyl-tRNA(Arg) + AMP + diphosphate. This is Arginine--tRNA ligase from Methanosarcina acetivorans (strain ATCC 35395 / DSM 2834 / JCM 12185 / C2A).